A 245-amino-acid polypeptide reads, in one-letter code: 6-carboxyhexanoate--CoA ligase (245 aa).

It belongs to the BioW family. Homodimer. Mg(2+) serves as cofactor.

The catalysed reaction is heptanedioate + ATP + CoA = 6-carboxyhexanoyl-CoA + AMP + diphosphate. It participates in metabolic intermediate metabolism; pimeloyl-CoA biosynthesis; pimeloyl-CoA from pimelate: step 1/1. Catalyzes the transformation of pimelate into pimeloyl-CoA with concomitant hydrolysis of ATP to AMP. This chain is 6-carboxyhexanoate--CoA ligase, found in Sulfurihydrogenibium azorense (strain DSM 15241 / OCM 825 / Az-Fu1).